The sequence spans 189 residues: MADKSYQPTLAGLRAFAAVAEKQHFGSAASALGVNQSTLSQALAGLESGLGVRLIERSTRRVFLTPEGRQLLPHARAVLEAVDAFTAAAAGASDPLQGSLRLGLIPTMAPYVLPTVLAGLAERLPALTLRVVEDQTERLLAALREGALDAALIALPAETSGLSAVPIYDEDFVLALPPGHPLSGKRRVP.

Residues 8-65 enclose the HTH lysR-type domain; sequence PTLAGLRAFAAVAEKQHFGSAASALGVNQSTLSQALAGLESGLGVRLIERSTRRVFLT. Residues 25–44 constitute a DNA-binding region (H-T-H motif); it reads FGSAASALGVNQSTLSQALA.

Belongs to the LysR transcriptional regulatory family.

In terms of biological role, required for the induction the katG gene for catalase. Involved in the response to hydrogen peroxide. The chain is Probable hydrogen peroxide-inducible genes activator (oxyR) from Mycobacterium xenopi.